The primary structure comprises 316 residues: D-alanine--D-alanine ligase (316 aa).

Positions 104–303 constitute an ATP-grasp domain; that stretch reads KRVWLQHGLP…YADLCVAILA (200 aa). 130–185 is an ATP binding site; sequence PDRLGLPLILKPPHEGSTVGITKVAGYSDMKAAYELAARFDAEVLAEQFITGRELT. Mg(2+) contacts are provided by D257, E270, and N272.

This sequence belongs to the D-alanine--D-alanine ligase family. It depends on Mg(2+) as a cofactor. Mn(2+) serves as cofactor.

Its subcellular location is the cytoplasm. It catalyses the reaction 2 D-alanine + ATP = D-alanyl-D-alanine + ADP + phosphate + H(+). It participates in cell wall biogenesis; peptidoglycan biosynthesis. Cell wall formation. This Bordetella parapertussis (strain 12822 / ATCC BAA-587 / NCTC 13253) protein is D-alanine--D-alanine ligase.